Reading from the N-terminus, the 204-residue chain is Urease accessory protein UreG (204 aa).

GTP is bound at residue 12–19 (GPVGSGKT).

The protein belongs to the SIMIBI class G3E GTPase family. UreG subfamily. As to quaternary structure, homodimer. UreD, UreF and UreG form a complex that acts as a GTP-hydrolysis-dependent molecular chaperone, activating the urease apoprotein by helping to assemble the nickel containing metallocenter of UreC. The UreE protein probably delivers the nickel.

The protein localises to the cytoplasm. In terms of biological role, facilitates the functional incorporation of the urease nickel metallocenter. This process requires GTP hydrolysis, probably effectuated by UreG. The polypeptide is Urease accessory protein UreG (Azotobacter vinelandii (strain DJ / ATCC BAA-1303)).